A 125-amino-acid polypeptide reads, in one-letter code: Small ribosomal subunit protein uS13 (125 aa).

The disordered stretch occupies residues 93–125 (RAGLPVRGQRTRTNARTRRGARKTVAGKKKATR). A compositionally biased stretch (basic residues) spans 101–125 (QRTRTNARTRRGARKTVAGKKKATR).

The protein belongs to the universal ribosomal protein uS13 family. As to quaternary structure, part of the 30S ribosomal subunit. Forms a loose heterodimer with protein S19. Forms two bridges to the 50S subunit in the 70S ribosome.

Its function is as follows. Located at the top of the head of the 30S subunit, it contacts several helices of the 16S rRNA. In the 70S ribosome it contacts the 23S rRNA (bridge B1a) and protein L5 of the 50S subunit (bridge B1b), connecting the 2 subunits; these bridges are implicated in subunit movement. Contacts the tRNAs in the A and P-sites. The protein is Small ribosomal subunit protein uS13 of Synechococcus elongatus (strain ATCC 33912 / PCC 7942 / FACHB-805) (Anacystis nidulans R2).